The following is a 106-amino-acid chain: Phosphoribosyl-ATP pyrophosphatase (106 aa).

This sequence belongs to the PRA-PH family.

The protein resides in the cytoplasm. The catalysed reaction is 1-(5-phospho-beta-D-ribosyl)-ATP + H2O = 1-(5-phospho-beta-D-ribosyl)-5'-AMP + diphosphate + H(+). It functions in the pathway amino-acid biosynthesis; L-histidine biosynthesis; L-histidine from 5-phospho-alpha-D-ribose 1-diphosphate: step 2/9. The protein is Phosphoribosyl-ATP pyrophosphatase of Lactiplantibacillus plantarum (strain ATCC BAA-793 / NCIMB 8826 / WCFS1) (Lactobacillus plantarum).